Consider the following 479-residue polypeptide: MVENKSKVKDISLAPFGKMQMEISENEMPGLMRIREEYGKDQPLKNAKITGCLHMTVECALLIETLQKLGAQIRWCSCNIYSTADYAAAAVSTLENVTVFAWKNETLEEYWWCVESALTWGDGDDNGPDMIVDDGGDATLLVHKGVEYEKLYEEKNILPDPEKAKNEEERCFLTLLKNSILKNPKKWTNIAKKIIGVSEETTTGVLRLKKMDKQNELLFTAINVNDAVTKQKYDNVYGCRHSLPDGLMRATDFLISGKIVVICGYGDVGKGCASSMKGLGARVYITEIDPICAIQAVMEGFNVVTLDEIVDKGDFFITCTGNVDVIKLEHLLKMKNNAVVGNIGHFDDEIQVNELFNYKGIHIENVKPQVDRITLPNGNKIIVLARGRLLNLGCATGHPAFVMSFSFCNQTFAQLDLWQNKDTNKYENKVYLLPKHLDEKVALYHLKKLNASLTELDDNQCQFLGVNKSGPFKSNEYRY.

Substrate contacts are provided by T56, D134, and E200. 201-203 (TTT) is a binding site for NAD(+). Substrate is bound by residues K230 and D234. Residues N235, 264-269 (GYGDVG), E287, N322, 343-345 (IGH), and N391 contribute to the NAD(+) site.

It belongs to the adenosylhomocysteinase family. Homotetramer. Requires NAD(+) as cofactor.

It carries out the reaction S-adenosyl-L-homocysteine + H2O = L-homocysteine + adenosine. It participates in amino-acid biosynthesis; L-homocysteine biosynthesis; L-homocysteine from S-adenosyl-L-homocysteine: step 1/1. Adenosylhomocysteine is a competitive inhibitor of S-adenosyl-L-methionine-dependent methyl transferase reactions; therefore adenosylhomocysteinase may play a key role in the control of methylations via regulation of the intracellular concentration of adenosylhomocysteine. This Plasmodium falciparum (isolate 3D7) protein is Adenosylhomocysteinase.